Here is a 549-residue protein sequence, read N- to C-terminus: Myotubularin-related protein 9 (549 aa).

At Met-1 the chain carries N-acetylmethionine. One can recognise a GRAM domain in the interval 4-99 (AELIKTPRVD…LNIASSIEAL (96 aa)). A Myotubularin phosphatase domain is found at 123–498 (GWHSFLPEQE…QSLPLWEGIF (376 aa)). Positions 508 to 542 (LDEAYEEMVNIIEYNKELQAKVNILRRQLAELETE) form a coiled coil. The residue at position 548 (Ser-548) is a Phosphoserine.

It belongs to the protein-tyrosine phosphatase family. Non-receptor class myotubularin subfamily. In terms of assembly, homodimer. Heterodimer (via C-terminus) with lipid phosphatase MTMR6 (via C-terminus). Heterodimer (via coiled coil domain) with lipid phosphatase MTMR7 (via C-terminus). Heterodimer with lipid phosphatase MTMR8. Expressed in many tissues.

The protein localises to the cytoplasm. Its subcellular location is the cell projection. It is found in the ruffle membrane. It localises to the perinuclear region. The protein resides in the endoplasmic reticulum. Acts as an adapter for myotubularin-related phosphatases. Increases lipid phosphatase MTMR6 catalytic activity, specifically towards phosphatidylinositol 3,5-bisphosphate and MTMR6 binding affinity for phosphorylated phosphatidylinositols. Positively regulates lipid phosphatase MTMR7 catalytic activity. Increases MTMR8 catalytic activity towards phosphatidylinositol 3-phosphate. The formation of the MTMR6-MTMR9 complex, stabilizes both MTMR6 and MTMR9 protein levels. Stabilizes MTMR8 protein levels. Plays a role in the late stages of macropinocytosis possibly by regulating MTMR6-mediated dephosphorylation of phosphatidylinositol 3-phosphate in membrane ruffles. Negatively regulates autophagy, in part via its association with MTMR8. Negatively regulates DNA damage-induced apoptosis, in part via its association with MTMR6. Does not bind mono-, di- and tri-phosphorylated phosphatidylinositols, phosphatidic acid and phosphatidylserine. This chain is Myotubularin-related protein 9 (MTMR9), found in Homo sapiens (Human).